A 280-amino-acid polypeptide reads, in one-letter code: Acetyl-coenzyme A carboxylase carboxyl transferase subunit beta (280 aa).

A CoA carboxyltransferase N-terminal domain is found at 24-280; sequence AWIKCDKCKN…IYTLIRHTHG (257 aa). Positions 28, 31, 47, and 50 each coordinate Zn(2+). The segment at 28–50 adopts a C4-type zinc-finger fold; sequence CDKCKNILYIEDLLKNLKICPHC.

The protein belongs to the AccD/PCCB family. Acetyl-CoA carboxylase is a heterohexamer composed of biotin carboxyl carrier protein (AccB), biotin carboxylase (AccC) and two subunits each of ACCase subunit alpha (AccA) and ACCase subunit beta (AccD). Requires Zn(2+) as cofactor.

The protein resides in the cytoplasm. It carries out the reaction N(6)-carboxybiotinyl-L-lysyl-[protein] + acetyl-CoA = N(6)-biotinyl-L-lysyl-[protein] + malonyl-CoA. The protein operates within lipid metabolism; malonyl-CoA biosynthesis; malonyl-CoA from acetyl-CoA: step 1/1. In terms of biological role, component of the acetyl coenzyme A carboxylase (ACC) complex. Biotin carboxylase (BC) catalyzes the carboxylation of biotin on its carrier protein (BCCP) and then the CO(2) group is transferred by the transcarboxylase to acetyl-CoA to form malonyl-CoA. This chain is Acetyl-coenzyme A carboxylase carboxyl transferase subunit beta, found in Sulfurihydrogenibium sp. (strain YO3AOP1).